Here is a 91-residue protein sequence, read N- to C-terminus: Bacterial microcompartment shell protein PduJ (91 aa).

In terms of domain architecture, BMC spans 4-88 (ALGLVETKGL…PHSDVEAILP (85 aa)).

This sequence belongs to the bacterial microcompartments protein family. Homohexamer with a central pore. Interacts with PduP, which targets PduP to the BMC. Interacts with shell protein PduA.

The protein resides in the bacterial microcompartment. The protein operates within polyol metabolism; 1,2-propanediol degradation. Functionally, one of the major shell proteins of the bacterial microcompartment (BMC) dedicated to 1,2-propanediol (1,2-PD) degradation. At least one of PduA or PduJ is required for BMC assembly; it must be encoded as the first gene in the pdu operon. Required for structural integrity of BMCs and to mitigate propionaldehyde toxicity, probably joins facets responsible for BMC closure. Probably the hub for binding multiple enzymes to the interior of the BMC. In terms of biological role, expression of a cosmid containing the full 21-gene pdu operon in E.coli allows E.coli to grow on 1,2-PD with the appearance of BMCs in its cytoplasm. Overexpression of this protein leads to an internal structure with a whorled architecture. The 1,2-PD-specific bacterial microcompartment (BMC) concentrates low levels of 1,2-PD catabolic enzymes, concentrates volatile reaction intermediates thus enhancing pathway flux and keeps the level of toxic, mutagenic propionaldehyde low. The sequence is that of Bacterial microcompartment shell protein PduJ from Citrobacter freundii.